Here is a 71-residue protein sequence, read N- to C-terminus: DNA-directed RNA polymerase subunit 10-like protein (71 aa).

Positions 7, 10, 44, and 45 each coordinate Zn(2+).

The protein belongs to the archaeal Rpo10/eukaryotic RPB10 RNA polymerase subunit family. Interacts with IYO.

Its subcellular location is the nucleus. In Arabidopsis thaliana (Mouse-ear cress), this protein is DNA-directed RNA polymerase subunit 10-like protein.